The primary structure comprises 294 residues: UDP-3-O-acyl-N-acetylglucosamine deacetylase (294 aa).

Zn(2+)-binding residues include His-75, His-232, and Asp-236. His-259 functions as the Proton donor in the catalytic mechanism.

This sequence belongs to the LpxC family. Zn(2+) serves as cofactor.

The enzyme catalyses a UDP-3-O-[(3R)-3-hydroxyacyl]-N-acetyl-alpha-D-glucosamine + H2O = a UDP-3-O-[(3R)-3-hydroxyacyl]-alpha-D-glucosamine + acetate. It participates in glycolipid biosynthesis; lipid IV(A) biosynthesis; lipid IV(A) from (3R)-3-hydroxytetradecanoyl-[acyl-carrier-protein] and UDP-N-acetyl-alpha-D-glucosamine: step 2/6. In terms of biological role, catalyzes the hydrolysis of UDP-3-O-myristoyl-N-acetylglucosamine to form UDP-3-O-myristoylglucosamine and acetate, the committed step in lipid A biosynthesis. This is UDP-3-O-acyl-N-acetylglucosamine deacetylase from Campylobacter lari (strain RM2100 / D67 / ATCC BAA-1060).